Reading from the N-terminus, the 466-residue chain is MGWITEDLIRRNAEHNDCVIFSLEELSLHQQEIERLEHIDKWCRDLKILYLQNNLIGKIENVSKLKKLEYLNLALNNIEKIENLEGCEELAKLDLTVNFIGELSSIKNLQHNIHLKELFLMGNPCASFDHYREFVVATLPQLKWLDGKEIEPSERIKALQDYSVIEPQIREQEKDHCLKRAKLKEEAQRKHQEEDKNEDKRSNAGFDGRWYTDINATLSSLESKDHLQAPDTEEHNTKKLDNSEDDLEFWNKPCLFTPESRLETLRHMEKQRKKQEKLSEKKKKVKPPRTLITEDGKALNVNEPKIDFSLKDNEKQIILDLAVYRYMDTSLIDVDVQPTYVRVMIKGKPFQLVLPAEVKPDSSSAKRSQTTGHLVICMPKVGEVITGGQRAFKSMKTTSDRSREQTNTRSKHMEKLEVDPSKHSFPDVTNIVQEKKHTPRRRPEPKIIPSEEDPTFEDNPEVPPLI.

LRR repeat units follow at residues 22 to 43, 45 to 66, 67 to 88, and 89 to 110; these read SLEE…DKWC, DLKI…SKLK, KLEY…EGCE, and ELAK…KNLQ. The LRRCT domain maps to 123-161; the sequence is NPCASFDHYREFVVATLPQLKWLDGKEIEPSERIKALQD. Residues 178 to 204 adopt a coiled-coil conformation; that stretch reads LKRAKLKEEAQRKHQEEDKNEDKRSNA. Positions 185-202 are enriched in basic and acidic residues; sequence EEAQRKHQEEDKNEDKRS. Disordered stretches follow at residues 185–206, 268–288, and 391–466; these read EEAQ…NAGF, MEKQ…VKPP, and AFKS…PPLI. Residues 269–287 are compositionally biased toward basic residues; the sequence is EKQRKKQEKLSEKKKKVKP. Residues 301–396 enclose the CS domain; the sequence is VNEPKIDFSL…GGQRAFKSMK (96 aa). Composition is skewed to basic and acidic residues over residues 398-425 and 433-445; these read TSDR…KHSF and QEKK…RPEP. The segment covering 450-460 has biased composition (acidic residues); that stretch reads SEEDPTFEDNP.

The protein belongs to the tilB family. Interacts (via CS domain) with ZMYND10 (via C-terminus). In terms of tissue distribution, expressed predominantly in testis and in nasal epithelial cells.

It is found in the cytoplasm. Its subcellular location is the cell projection. The protein resides in the cilium. The protein localises to the dynein axonemal particle. It localises to the flagellum. Involved in dynein arm assembly, is important for expression and transporting outer dynein arm (ODA) proteins from the cytoplasm to the cilia. Acts as a crucial component in the formation and motility of spermatozoal flagella. The chain is Dynein axonemal assembly factor 11 from Homo sapiens (Human).